An 856-amino-acid polypeptide reads, in one-letter code: DNA mismatch repair protein MutS (856 aa).

ATP is bound at residue 617-624 (GPNMGGKS).

This sequence belongs to the DNA mismatch repair MutS family.

In terms of biological role, this protein is involved in the repair of mismatches in DNA. It is possible that it carries out the mismatch recognition step. This protein has a weak ATPase activity. This Psychromonas ingrahamii (strain DSM 17664 / CCUG 51855 / 37) protein is DNA mismatch repair protein MutS.